The sequence spans 180 residues: UPF0227 protein YE1706 (180 aa).

Belongs to the UPF0227 family.

The protein is UPF0227 protein YE1706 of Yersinia enterocolitica serotype O:8 / biotype 1B (strain NCTC 13174 / 8081).